Reading from the N-terminus, the 103-residue chain is N(4)-acetylcytidine amidohydrolase (103 aa).

The ASCH domain occupies 6–100; sequence ITFFQRFQDD…GESQFYVIEF (95 aa). Lysine 21 acts as the Proton acceptor in catalysis. Threonine 24 serves as the catalytic Nucleophile. Glutamate 74 (proton donor) is an active-site residue.

It belongs to the N(4)-acetylcytidine amidohydrolase family.

The enzyme catalyses N(4)-acetylcytidine + H2O = cytidine + acetate + H(+). It carries out the reaction N(4)-acetyl-2'-deoxycytidine + H2O = 2'-deoxycytidine + acetate + H(+). The catalysed reaction is N(4)-acetylcytosine + H2O = cytosine + acetate + H(+). Its function is as follows. Catalyzes the hydrolysis of N(4)-acetylcytidine (ac4C). This is N(4)-acetylcytidine amidohydrolase from Klebsiella pneumoniae subsp. pneumoniae (strain ATCC 700721 / MGH 78578).